Reading from the N-terminus, the 223-residue chain is Thiamine-phosphate synthase (223 aa).

4-amino-2-methyl-5-(diphosphooxymethyl)pyrimidine contacts are provided by residues Gln-37–Lys-41 and Asp-72. The Mg(2+) site is built by Asp-73 and Asp-92. Ser-110 contributes to the 4-amino-2-methyl-5-(diphosphooxymethyl)pyrimidine binding site. Thr-136 to Ser-138 is a binding site for 2-[(2R,5Z)-2-carboxy-4-methylthiazol-5(2H)-ylidene]ethyl phosphate. Lys-139 serves as a coordination point for 4-amino-2-methyl-5-(diphosphooxymethyl)pyrimidine. 2-[(2R,5Z)-2-carboxy-4-methylthiazol-5(2H)-ylidene]ethyl phosphate-binding positions include Gly-168 and Ile-188–Ser-189.

This sequence belongs to the thiamine-phosphate synthase family. It depends on Mg(2+) as a cofactor.

It carries out the reaction 2-[(2R,5Z)-2-carboxy-4-methylthiazol-5(2H)-ylidene]ethyl phosphate + 4-amino-2-methyl-5-(diphosphooxymethyl)pyrimidine + 2 H(+) = thiamine phosphate + CO2 + diphosphate. The catalysed reaction is 2-(2-carboxy-4-methylthiazol-5-yl)ethyl phosphate + 4-amino-2-methyl-5-(diphosphooxymethyl)pyrimidine + 2 H(+) = thiamine phosphate + CO2 + diphosphate. It catalyses the reaction 4-methyl-5-(2-phosphooxyethyl)-thiazole + 4-amino-2-methyl-5-(diphosphooxymethyl)pyrimidine + H(+) = thiamine phosphate + diphosphate. It functions in the pathway cofactor biosynthesis; thiamine diphosphate biosynthesis; thiamine phosphate from 4-amino-2-methyl-5-diphosphomethylpyrimidine and 4-methyl-5-(2-phosphoethyl)-thiazole: step 1/1. In terms of biological role, condenses 4-methyl-5-(beta-hydroxyethyl)thiazole monophosphate (THZ-P) and 2-methyl-4-amino-5-hydroxymethyl pyrimidine pyrophosphate (HMP-PP) to form thiamine monophosphate (TMP). The sequence is that of Thiamine-phosphate synthase from Streptococcus agalactiae serotype III (strain NEM316).